The primary structure comprises 174 residues: UBX domain-containing protein 5 (174 aa).

Residues 8–58 (QKEKFAEDRALLSQQNKEYAESLAKDIAKKEEKDKIRFEAEQKELRKKTIQ) are a coiled coil. Residues 74-120 (RLLVRYPNGSRLILSFSPSQPMTSLFDAIILNPACPDYFSVRSVYPR) form the UBX domain.

As to quaternary structure, forms a complex composed of deubiquitinating enzyme atx-3, adapter ubxn-5 and cdc-48.1. Interacts with atx-3 (via C-terminus). Interacts with cdc-48.1 (via N-terminus) and cdc-48.2. Specifically expressed in the germline.

In terms of biological role, probably acts as an adapter for ATPase cdc-48.1 and/or cdc-48.2, conferring substrate specificity. Unlike other UBX domain-containing protein does not bind 'Lys-48'-polyubiquitinated chain. The sequence is that of UBX domain-containing protein 5 from Caenorhabditis elegans.